A 360-amino-acid chain; its full sequence is Magnesium-protoporphyrin IX monomethyl ester [oxidative] cyclase (360 aa).

Residues 1–20 form a disordered region; the sequence is MVPPTAIAEASRSGGEPAIK.

It belongs to the AcsF family. Fe cation is required as a cofactor.

It carries out the reaction Mg-protoporphyrin IX 13-monomethyl ester + 3 NADPH + 3 O2 + 2 H(+) = 3,8-divinyl protochlorophyllide a + 3 NADP(+) + 5 H2O. Its pathway is porphyrin-containing compound metabolism; chlorophyll biosynthesis (light-independent). Catalyzes the formation of the isocyclic ring in chlorophyll biosynthesis. Mediates the cyclase reaction, which results in the formation of divinylprotochlorophyllide (Pchlide) characteristic of all chlorophylls from magnesium-protoporphyrin IX 13-monomethyl ester (MgPMME). The sequence is that of Magnesium-protoporphyrin IX monomethyl ester [oxidative] cyclase from Synechococcus sp. (strain RCC307).